Consider the following 132-residue polypeptide: Ribonuclease VapC (132 aa).

The PINc domain maps to 4–123 (YMLDTNIVIY…SNNLREFERV (120 aa)). 2 residues coordinate Mg(2+): Asp7 and Asp98.

Belongs to the PINc/VapC protein family. As to quaternary structure, probably forms a complex with cognate antitoxin VapB2. Mg(2+) is required as a cofactor.

Its function is as follows. Toxic component of a type II toxin-antitoxin (TA) system. Acts as an RNase. Its toxic effect is neutralized by cognate antitoxin VapB2 but not by non-cognate antitoxin VapB1. This Haemophilus influenzae (strain 86-028NP) protein is Ribonuclease VapC.